A 131-amino-acid chain; its full sequence is Phosphoribosyl-AMP cyclohydrolase (131 aa).

Aspartate 90 serves as a coordination point for Mg(2+). Cysteine 91 is a binding site for Zn(2+). 2 residues coordinate Mg(2+): aspartate 92 and aspartate 94. Positions 107 and 114 each coordinate Zn(2+).

It belongs to the PRA-CH family. Homodimer. Mg(2+) is required as a cofactor. It depends on Zn(2+) as a cofactor.

Its subcellular location is the cytoplasm. The enzyme catalyses 1-(5-phospho-beta-D-ribosyl)-5'-AMP + H2O = 1-(5-phospho-beta-D-ribosyl)-5-[(5-phospho-beta-D-ribosylamino)methylideneamino]imidazole-4-carboxamide. It participates in amino-acid biosynthesis; L-histidine biosynthesis; L-histidine from 5-phospho-alpha-D-ribose 1-diphosphate: step 3/9. Functionally, catalyzes the hydrolysis of the adenine ring of phosphoribosyl-AMP. The chain is Phosphoribosyl-AMP cyclohydrolase from Hyphomonas neptunium (strain ATCC 15444).